Here is a 193-residue protein sequence, read N- to C-terminus: 3-isopropylmalate dehydratase small subunit (193 aa).

The protein belongs to the LeuD family. LeuD type 1 subfamily. As to quaternary structure, heterodimer of LeuC and LeuD.

It catalyses the reaction (2R,3S)-3-isopropylmalate = (2S)-2-isopropylmalate. Its pathway is amino-acid biosynthesis; L-leucine biosynthesis; L-leucine from 3-methyl-2-oxobutanoate: step 2/4. In terms of biological role, catalyzes the isomerization between 2-isopropylmalate and 3-isopropylmalate, via the formation of 2-isopropylmaleate. This is 3-isopropylmalate dehydratase small subunit from Bacillus cereus (strain 03BB102).